Reading from the N-terminus, the 84-residue chain is FMRFamide-like neuropeptides 26 (84 aa).

The signal sequence occupies residues 1-19 (MKVMFMLALLFSSLVATSA). Positions 20–48 (FRLPFQFFGANEDFNSGLTKRNYYESKPY) are excised as a propeptide. Residues Phe61 and Phe82 each carry the phenylalanine amide modification.

It belongs to the FARP (FMRFamide related peptide) family. Each flp gene is expressed in a distinct set of neurons.

The protein localises to the secreted. FMRFamides and FMRFamide-like peptides are neuropeptides. This is FMRFamide-like neuropeptides 26 from Caenorhabditis elegans.